Here is a 553-residue protein sequence, read N- to C-terminus: ATP synthase F(1) complex subunit alpha, mitochondrial (553 aa).

Residues 1 to 43 (MLSVRIAAAVARALPRRAGLVSKNALGSSFVGTRNLHASNTRL) constitute a mitochondrion transit peptide. A phosphoserine mark is found at Ser-53 and Ser-65. The residue at position 76 (Ser-76) is a Phosphoserine; alternate. Ser-76 carries O-linked (GlcNAc) serine; alternate glycosylation. Ser-106 is subject to Phosphoserine. Residues Lys-123, Lys-126, and Lys-132 each carry the N6-acetyllysine modification. Thr-134 is modified (phosphothreonine). Position 161 is an N6-acetyllysine; alternate (Lys-161). Position 161 is an N6-succinyllysine; alternate (Lys-161). Phosphoserine is present on Ser-166. N6-acetyllysine; alternate is present on Lys-167. An N6-succinyllysine; alternate modification is found at Lys-167. Phosphoserine is present on Ser-184. Arg-204 bears the Omega-N-methylarginine mark. ATP contacts are provided by Gln-215, Gly-217, Lys-218, Thr-219, and Ser-220. Residue Thr-219 participates in Mg(2+) binding. N6-acetyllysine; alternate occurs at positions 230 and 239. Residues Lys-230 and Lys-239 each carry the N6-succinyllysine; alternate modification. Lys-240 carries the post-translational modification N6-acetyllysine. An N6-acetyllysine; alternate mark is found at Lys-261 and Lys-305. N6-succinyllysine; alternate is present on residues Lys-261 and Lys-305. Residue Asp-312 coordinates Mg(2+). Lys-427 bears the N6-acetyllysine; alternate mark. Lys-427 carries the post-translational modification N6-succinyllysine; alternate. Lys-434 is modified (N6-acetyllysine). ATP-binding residues include Gln-473 and Gln-475. An N6-acetyllysine; alternate mark is found at Lys-498, Lys-506, Lys-531, and Lys-539. Lys-498, Lys-506, Lys-531, and Lys-539 each carry N6-succinyllysine; alternate. Lys-541 carries the post-translational modification N6-acetyllysine.

Belongs to the ATPase alpha/beta chains family. In terms of assembly, homotrimer. Component of the ATP synthase complex composed at least of ATP5F1A/subunit alpha, ATP5F1B/subunit beta, ATP5MC1/subunit c (homooctomer), MT-ATP6/subunit a, MT-ATP8/subunit 8, ATP5ME/subunit e, ATP5MF/subunit f, ATP5MG/subunit g, ATP5MK/subunit k, ATP5MJ/subunit j, ATP5F1C/subunit gamma, ATP5F1D/subunit delta, ATP5F1E/subunit epsilon, ATP5PF/subunit F6, ATP5PB/subunit b, ATP5PD/subunit d, ATP5PO/subunit OSCP. ATP synthase complex consists of a soluble F(1) head domain (subunits alpha(3) and beta(3)) - the catalytic core - and a membrane F(0) domain - the membrane proton channel (subunits c, a, 8, e, f, g, k and j). These two domains are linked by a central stalk (subunits gamma, delta, and epsilon) rotating inside the F1 region and a stationary peripheral stalk (subunits F6, b, d, and OSCP). Interacts with ATPAF2. Interacts with HRG; the interaction occurs on the surface of T-cells and alters the cell morphology when associated with concanavalin (in vitro). Interacts with PLG (angiostatin peptide); the interaction inhibits most of the angiogenic properties of angiostatin. Interacts with BLOC1S1. Interacts with BCL2L1 isoform BCL-X(L); the interaction mediates the association of BCL2L1 isoform BCL-X(L) with the mitochondrial membrane F(1)F(0) ATP synthase and enhances neurons metabolic efficiency. Interacts with CLN5 and PPT1. Interacts with S100A1; this interaction increases F1-ATPase activity. Interacts with ABCB7; this interaction allows the regulation of cellular iron homeostasis and cellular reactive oxygen species (ROS) levels in cardiomyocytes. Acetylated on lysine residues. BLOC1S1 is required for acetylation. Expressed in flagella of epididymal sperm.

Its subcellular location is the mitochondrion. It is found in the mitochondrion inner membrane. The protein localises to the cell membrane. Its function is as follows. Subunit alpha, of the mitochondrial membrane ATP synthase complex (F(1)F(0) ATP synthase or Complex V) that produces ATP from ADP in the presence of a proton gradient across the membrane which is generated by electron transport complexes of the respiratory chain. ATP synthase complex consist of a soluble F(1) head domain - the catalytic core - and a membrane F(1) domain - the membrane proton channel. These two domains are linked by a central stalk rotating inside the F(1) region and a stationary peripheral stalk. During catalysis, ATP synthesis in the catalytic domain of F(1) is coupled via a rotary mechanism of the central stalk subunits to proton translocation. In vivo, can only synthesize ATP although its ATP hydrolase activity can be activated artificially in vitro. With the catalytic subunit beta (ATP5F1B), forms the catalytic core in the F(1) domain. Subunit alpha does not bear the catalytic high-affinity ATP-binding sites. This is ATP synthase F(1) complex subunit alpha, mitochondrial from Rattus norvegicus (Rat).